The following is a 267-amino-acid chain: AMP/ADP-polyphosphate phosphotransferase (267 aa).

It belongs to the polyphosphate kinase 2 (PPK2) family. Class III subfamily. The cofactor is Mn(2+).

It catalyses the reaction [phosphate](n) + ADP = [phosphate](n+1) + AMP. The enzyme catalyses [phosphate](n) + ATP = [phosphate](n+1) + ADP. Functionally, uses inorganic polyphosphate (polyP) as a donor to convert both AMP to ADP and ADP to ATP. Can also use GMP, CMP, UMP, GDP, CDP and UDP. This Meiothermus ruber (strain ATCC 35948 / DSM 1279 / VKM B-1258 / 21) (Thermus ruber) protein is AMP/ADP-polyphosphate phosphotransferase.